The primary structure comprises 411 residues: Carbohydrate sulfotransferase 1 (411 aa).

A topological domain (cytoplasmic) is located at residue M1. A helical; Signal-anchor for type II membrane protein membrane pass occupies residues Q2–I23. The Lumenal portion of the chain corresponds to R24–L411. An N-linked (GlcNAc...) asparagine glycan is attached at N56. T69 to F75 lines the 3'-phosphoadenylyl sulfate pocket. Residues N145 and N189 are each glycosylated (N-linked (GlcNAc...) asparagine). R234–S242 contacts 3'-phosphoadenylyl sulfate. N-linked (GlcNAc...) asparagine glycosylation is present at N334. The Cell attachment site motif lies at R337–D339.

This sequence belongs to the sulfotransferase 1 family. Gal/GlcNAc/GalNAc subfamily.

It is found in the golgi apparatus membrane. The enzyme catalyses 3'-phosphoadenylyl sulfate + keratan = adenosine 3',5'-bisphosphate + keratan 6'-sulfate.. Its pathway is glycan metabolism. Functionally, sulfotransferase that utilizes 3'-phospho-5'-adenylyl sulfate (PAPS) as sulfonate donor to catalyze the transfer of sulfate to position 6 of internal galactose (Gal) residues of keratan. Cooperates with B4GALT4 and B3GNT7 glycosyltransferases and CHST6 sulfotransferase to construct and elongate disulfated disaccharide unit [-&gt;3(6-sulfoGalbeta)1-&gt;4(6-sulfoGlcNAcbeta)1-&gt;] within keratan sulfate polymer. Has a preference for sulfating keratan sulfate, but it also transfers sulfate to the unsulfated polymer. Involved in biosynthesis of phosphacan, a major keratan sulfate proteoglycan in the developing brain. Involved in biosynthesis of 6-sulfoGalbeta-containing O-linked glycans in high endothelial venules of lymph nodes. May act in a synergistic manner with CHST4 to generate sialyl 6',6-disulfo Lewis X motif, a recognition determinant for immune cell receptors implicated in leukocyte trafficking. Catalyzes sulfation of N-acetyllactosamine (LacNAc) oligosaccharides with highest efficiency for sialylated LacNAc structures. The protein is Carbohydrate sulfotransferase 1 (Chst1) of Rattus norvegicus (Rat).